The sequence spans 302 residues: Sulfate adenylyltransferase subunit 2 (302 aa).

The tract at residues 280-302 is disordered; that stretch reads RQGRAIDHDQSGSMELKKRQGYF.

This sequence belongs to the PAPS reductase family. CysD subfamily. As to quaternary structure, heterodimer composed of CysD, the smaller subunit, and CysN.

The catalysed reaction is sulfate + ATP + H(+) = adenosine 5'-phosphosulfate + diphosphate. It participates in sulfur metabolism; hydrogen sulfide biosynthesis; sulfite from sulfate: step 1/3. In terms of biological role, with CysN forms the ATP sulfurylase (ATPS) that catalyzes the adenylation of sulfate producing adenosine 5'-phosphosulfate (APS) and diphosphate, the first enzymatic step in sulfur assimilation pathway. APS synthesis involves the formation of a high-energy phosphoric-sulfuric acid anhydride bond driven by GTP hydrolysis by CysN coupled to ATP hydrolysis by CysD. This is Sulfate adenylyltransferase subunit 2 from Vibrio parahaemolyticus serotype O3:K6 (strain RIMD 2210633).